The primary structure comprises 434 residues: Histidinol dehydrogenase (434 aa).

NAD(+)-binding residues include Y130, Q188, and N211. Positions 237, 259, and 262 each coordinate substrate. Residues Q259 and H262 each coordinate Zn(2+). Residues E326 and H327 each act as proton acceptor in the active site. Substrate contacts are provided by H327, D360, E414, and H419. Residue D360 participates in Zn(2+) binding. H419 lines the Zn(2+) pocket.

It belongs to the histidinol dehydrogenase family. Homodimer. Zn(2+) serves as cofactor. It depends on Mn(2+) as a cofactor.

It carries out the reaction L-histidinol + 2 NAD(+) + H2O = L-histidine + 2 NADH + 3 H(+). Its pathway is amino-acid biosynthesis; L-histidine biosynthesis; L-histidine from 5-phospho-alpha-D-ribose 1-diphosphate: step 9/9. Activity is lost when the metal is removed through urea denaturation or chelation, and can be regained by addition of metal. In terms of biological role, catalyzes the sequential NAD-dependent oxidations of L-histidinol to L-histidinaldehyde and then to L-histidine. This chain is Histidinol dehydrogenase (hisD), found in Salmonella typhimurium (strain LT2 / SGSC1412 / ATCC 700720).